A 363-amino-acid chain; its full sequence is tRNA N6-adenosine threonylcarbamoyltransferase (363 aa).

Residues His-121 and His-125 each contribute to the Fe cation site. Substrate contacts are provided by residues 143-147 (LASGG), Asp-176, Gly-189, and Asn-287. Position 315 (Asp-315) interacts with Fe cation.

The protein belongs to the KAE1 / TsaD family. Requires Fe(2+) as cofactor.

The protein resides in the cytoplasm. It carries out the reaction L-threonylcarbamoyladenylate + adenosine(37) in tRNA = N(6)-L-threonylcarbamoyladenosine(37) in tRNA + AMP + H(+). Its function is as follows. Required for the formation of a threonylcarbamoyl group on adenosine at position 37 (t(6)A37) in tRNAs that read codons beginning with adenine. Is involved in the transfer of the threonylcarbamoyl moiety of threonylcarbamoyl-AMP (TC-AMP) to the N6 group of A37, together with TsaE and TsaB. TsaD likely plays a direct catalytic role in this reaction. The polypeptide is tRNA N6-adenosine threonylcarbamoyltransferase (Rhodopseudomonas palustris (strain BisA53)).